Consider the following 258-residue polypeptide: Acyl-[acyl-carrier-protein]--UDP-N-acetylglucosamine O-acyltransferase (258 aa).

Belongs to the transferase hexapeptide repeat family. LpxA subfamily. In terms of assembly, homotrimer.

It is found in the cytoplasm. It catalyses the reaction a (3R)-hydroxyacyl-[ACP] + UDP-N-acetyl-alpha-D-glucosamine = a UDP-3-O-[(3R)-3-hydroxyacyl]-N-acetyl-alpha-D-glucosamine + holo-[ACP]. It participates in glycolipid biosynthesis; lipid IV(A) biosynthesis; lipid IV(A) from (3R)-3-hydroxytetradecanoyl-[acyl-carrier-protein] and UDP-N-acetyl-alpha-D-glucosamine: step 1/6. Involved in the biosynthesis of lipid A, a phosphorylated glycolipid that anchors the lipopolysaccharide to the outer membrane of the cell. This Stutzerimonas stutzeri (strain A1501) (Pseudomonas stutzeri) protein is Acyl-[acyl-carrier-protein]--UDP-N-acetylglucosamine O-acyltransferase.